The following is a 726-amino-acid chain: Sensory/regulatory protein RpfC (726 aa).

The Periplasmic portion of the chain corresponds to 1 to 22 (MKSPLPWLKRRLSGRADSEHAQ). Residues 1 to 22 (MKSPLPWLKRRLSGRADSEHAQ) are sensor. A helical membrane pass occupies residues 23 to 40 (NLIRIIITTLFISYLGWR). At 41–51 (YQHTHGDTLMA) the chain is on the cytoplasmic side. The chain crosses the membrane as a helical span at residues 52–72 (TWLILVGELLVSLGLMVAILL). The Periplasmic segment spans residues 73-94 (RPQVSHTRRLIGMLLDYTCTGA). A helical membrane pass occupies residues 95-115 (IMAIQGEPASPLYAVCMWVTI). At 116 to 127 (GNGLRYGSNYLR) the chain is on the cytoplasmic side. A helical transmembrane segment spans residues 128 to 148 (AATAMGSLCFLGAILISPYWK). The Periplasmic segment spans residues 149–151 (ANP). The helical transmembrane segment at 152–172 (YLSWGLLLGLIAVPLYFDSLL) threads the bilayer. Topologically, residues 173–726 (RAMTRAVREA…DGECSPRSNE (554 aa)) are cytoplasmic. Residues 195–417 (NMSHEFRTPL…VFWFELPMAI (223 aa)) form the Histidine kinase domain. H198 carries the post-translational modification Phosphohistidine; by autocatalysis. The Response regulatory domain maps to 463-581 (RMLVADDHEA…KLLDTLADLA (119 aa)). D512 is subject to 4-aspartylphosphate. An HPt domain is found at 618–711 (GEEFERQFVR…KAGKDALDAR (94 aa)). H657 bears the Phosphohistidine mark.

At low DSF concentrations, interacts with RpfF. Post-translationally, autophosphorylated. Activation may require a sequential transfer of a phosphate group from a His in the primary transmitter domain, to an Asp in the receiver domain and to a His in the secondary transmitter domain.

The protein localises to the cell inner membrane. The enzyme catalyses ATP + protein L-histidine = ADP + protein N-phospho-L-histidine.. With respect to regulation, binding of DSF to the sensor region causes allosteric change, which facilitates RpfC autophosphorylation. Functionally, hybrid sensor kinase that regulates diverse biological functions through two distinct molecular mechanisms. At low cell density, the extracellular concentration of the diffusible signaling factor (DSF) is below a threshold, and unphosphorylated RpfC is involved in the negative regulation of DSF synthesis, via direct interaction with the DSF synthase RpfF. Interaction prevents synthesis of DSF, which remains at a basal level. This activity does not involve the phosphorelay mechanism and is not dependent on RpfG. Is also member of the two-component regulatory system RpfG/RpfC, which is involved in the perception and response to DSF, which is essential for cell-cell signaling. At high cell density, the level of extracellular DSF increases and binding of DSF to the sensor region of RpfC causes autophosphorylation of RpfC, which results in the release of RpfF and the activation of RpfG via a four-step phosphorelay. Activation of RpfG leads to the positive regulation of biofilm dispersal and the production of virulence factors. This chain is Sensory/regulatory protein RpfC (rpfC), found in Xanthomonas campestris pv. campestris (strain 8004).